A 477-amino-acid polypeptide reads, in one-letter code: Bifunctional protein HldE (477 aa).

The ribokinase stretch occupies residues 1-318 (MKVTLPEFER…ENAVRGRAET (318 aa)). ATP is bound at residue 195 to 198 (NLSE). Asp-264 is an active-site residue. A cytidylyltransferase region spans residues 344–477 (MTNGVFDILH…IKKIQKDSDK (134 aa)).

This sequence in the N-terminal section; belongs to the carbohydrate kinase PfkB family. It in the C-terminal section; belongs to the cytidylyltransferase family. As to quaternary structure, homodimer.

It catalyses the reaction D-glycero-beta-D-manno-heptose 7-phosphate + ATP = D-glycero-beta-D-manno-heptose 1,7-bisphosphate + ADP + H(+). The enzyme catalyses D-glycero-beta-D-manno-heptose 1-phosphate + ATP + H(+) = ADP-D-glycero-beta-D-manno-heptose + diphosphate. It participates in nucleotide-sugar biosynthesis; ADP-L-glycero-beta-D-manno-heptose biosynthesis; ADP-L-glycero-beta-D-manno-heptose from D-glycero-beta-D-manno-heptose 7-phosphate: step 1/4. Its pathway is nucleotide-sugar biosynthesis; ADP-L-glycero-beta-D-manno-heptose biosynthesis; ADP-L-glycero-beta-D-manno-heptose from D-glycero-beta-D-manno-heptose 7-phosphate: step 3/4. Functionally, catalyzes the phosphorylation of D-glycero-D-manno-heptose 7-phosphate at the C-1 position to selectively form D-glycero-beta-D-manno-heptose-1,7-bisphosphate. Its function is as follows. Catalyzes the ADP transfer from ATP to D-glycero-beta-D-manno-heptose 1-phosphate, yielding ADP-D-glycero-beta-D-manno-heptose. This is Bifunctional protein HldE from Klebsiella pneumoniae (strain 342).